The primary structure comprises 160 residues: Endoribonuclease YbeY (160 aa).

Residues His125, His129, and His135 each coordinate Zn(2+).

It belongs to the endoribonuclease YbeY family. It depends on Zn(2+) as a cofactor.

The protein resides in the cytoplasm. Single strand-specific metallo-endoribonuclease involved in late-stage 70S ribosome quality control and in maturation of the 3' terminus of the 16S rRNA. This chain is Endoribonuclease YbeY, found in Leuconostoc citreum (strain KM20).